The following is a 955-amino-acid chain: Leucine-rich repeat-containing G-protein coupled receptor 4 (955 aa).

The first 21 residues, 1-21 (MGCPGWPLALFALLLASCSGG), serve as a signal peptide directing secretion. Topologically, residues 22–547 (PSGVSSPAPC…LLGSWMIRLT (526 aa)) are extracellular. One can recognise an LRRNT domain in the interval 26–59 (SSPAPCPAPCACDLDGGADCSGKGLVTVPDGLSV). 2 disulfides stabilise this stretch: Cys31–Cys37 and Cys35–Cys45. 10 LRR repeats span residues 57–81 (LSVF…AFKG), 83–105 (PYLE…ALSG), 106–129 (LKEL…SLKG), 131–153 (VSLQ…SFEG), 155–177 (VQLR…PLSN), 178–201 (LPSL…AFSN), 203–225 (SSLV…CFHG), 226–249 (LDNL…IRSL), 250–272 (PNLK…AFVK), and 274–296 (PLLR…AFQN). Residue Asn201 is glycosylated (N-linked (GlcNAc...) asparagine). Residues Asn296 and Asn316 are each glycosylated (N-linked (GlcNAc...) asparagine). LRR repeat units follow at residues 320–343 (TNNL…FCQE), 345–365 (KMLR…GFEG), 366–389 (CSSL…TFQG), 390–413 (LAAL…AFVT), and 415–437 (KALT…GLHG). A disulfide bridge links Cys341 with Cys366. N-linked (GlcNAc...) asparagine glycosylation occurs at Asn384. Cystine bridges form between Cys472/Cys525 and Cys473/Cys478. The chain crosses the membrane as a helical span at residues 548 to 568 (VWFIFLLALIFNVIVIVTMFA). Topologically, residues 569 to 578 (SCSQLTSSKL) are cytoplasmic. A helical transmembrane segment spans residues 579-599 (FIGLIAVSNLFMGVYTGTLTV). Residues 600–623 (LDTISWGQFAEFGIWWETGNGCKV) lie on the Extracellular side of the membrane. Cysteines 621 and 696 form a disulfide. Residues 624-644 (AGFLAIFSSESAIFFLMLAAI) traverse the membrane as a helical segment. Residues 645–666 (ERSLSAKDIIKKEKHQHLRKFQ) lie on the Cytoplasmic side of the membrane. A helical membrane pass occupies residues 667–687 (VASLLAVLLAAAAGCLPLFHI). The Extracellular segment spans residues 688-706 (GEFSSSPLCLPFPTGETPS). The helical transmembrane segment at 707-727 (LGFTVTLVLLNSLAFLIMVIT) threads the bilayer. Residues 728 to 759 (YTKLYCTIEKEDLSENAESSMIKHVAWLIFTN) lie on the Cytoplasmic side of the membrane. The helical transmembrane segment at 760–780 (CIFFCPVAFFSFAPLITAIYI) threads the bilayer. The Extracellular segment spans residues 781-786 (SPEIMK). A helical membrane pass occupies residues 787-807 (SVTLIFLPLPACLNPVLYVFF). At 808–955 (NPKFKEDWKL…YAYNIPRMKD (148 aa)) the chain is on the cytoplasmic side.

It belongs to the G-protein coupled receptor 1 family.

Its subcellular location is the cell membrane. In terms of biological role, receptor for R-spondins that potentiates the canonical Wnt signaling pathway and is involved in the formation of various organs. Upon binding to R-spondins (RSPO1, RSPO2, RSPO3 or RSPO4), associates with phosphorylated LRP6 and frizzled receptors that are activated by extracellular Wnt receptors, triggering the canonical Wnt signaling pathway to increase expression of target genes. In contrast to classical G-protein coupled receptors, does not activate heterotrimeric G-proteins to transduce the signal. Its function as activator of the Wnt signaling pathway is required for the development of various organs, including liver, kidney, intestine, bone, reproductive tract and eye. May play a role in regulating the circadian rhythms of plasma lipids. Required for proper development of GnRH neurons (gonadotropin-releasing hormone expressing neurons) that control the release of reproductive hormones from the pituitary gland. The polypeptide is Leucine-rich repeat-containing G-protein coupled receptor 4 (lgr4) (Xenopus tropicalis (Western clawed frog)).